We begin with the raw amino-acid sequence, 383 residues long: ATP phosphoribosyltransferase regulatory subunit (383 aa).

Belongs to the class-II aminoacyl-tRNA synthetase family. HisZ subfamily. As to quaternary structure, heteromultimer composed of HisG and HisZ subunits.

The protein localises to the cytoplasm. It participates in amino-acid biosynthesis; L-histidine biosynthesis; L-histidine from 5-phospho-alpha-D-ribose 1-diphosphate: step 1/9. Its function is as follows. Required for the first step of histidine biosynthesis. May allow the feedback regulation of ATP phosphoribosyltransferase activity by histidine. The chain is ATP phosphoribosyltransferase regulatory subunit from Chromobacterium violaceum (strain ATCC 12472 / DSM 30191 / JCM 1249 / CCUG 213 / NBRC 12614 / NCIMB 9131 / NCTC 9757 / MK).